Consider the following 89-residue polypeptide: Helix-loop-helix protein 15 (89 aa).

A disordered region spans residues 1–32 (MLMEDGGLDTTSEEYRKLSKAERRKRRRATPK). The span at 22–32 (ERRKRRRATPK) shows a compositional bias: basic residues. The basic motif stretch occupies residues 32–45 (KYRNLHATRERIRV). The bHLH domain occupies 32–84 (KYRNLHATRERIRVESFNMAFSQLRALLPTLPVEKKLSKIEILRFSIAYISFL). Positions 46–84 (ESFNMAFSQLRALLPTLPVEKKLSKIEILRFSIAYISFL) are helix-loop-helix motif.

As to expression, expressed in sensory head neurons of the lateral ganglion.

The protein resides in the nucleus. Functionally, transcription factor which binds the E box motif 5'-CA[TC][AG]TG-3'. Involved in modulating physiological aging, probably by regulating expression of branched-chain amino acid transferase-1, bcat-1. This Caenorhabditis elegans protein is Helix-loop-helix protein 15.